A 256-amino-acid chain; its full sequence is 3-methyl-2-oxobutanoate hydroxymethyltransferase (256 aa).

Asp-42 and Asp-86 together coordinate Mg(2+). 3-methyl-2-oxobutanoate-binding positions include 42–43 (DS), Asp-86, and Lys-116. A Mg(2+)-binding site is contributed by Glu-118. Glu-185 (proton acceptor) is an active-site residue.

The protein belongs to the PanB family. In terms of assembly, homodecamer; pentamer of dimers. The cofactor is Mg(2+).

The protein localises to the cytoplasm. The catalysed reaction is 3-methyl-2-oxobutanoate + (6R)-5,10-methylene-5,6,7,8-tetrahydrofolate + H2O = 2-dehydropantoate + (6S)-5,6,7,8-tetrahydrofolate. It participates in cofactor biosynthesis; (R)-pantothenate biosynthesis; (R)-pantoate from 3-methyl-2-oxobutanoate: step 1/2. Its function is as follows. Catalyzes the reversible reaction in which hydroxymethyl group from 5,10-methylenetetrahydrofolate is transferred onto alpha-ketoisovalerate to form ketopantoate. The sequence is that of 3-methyl-2-oxobutanoate hydroxymethyltransferase from Prochlorococcus marinus (strain SARG / CCMP1375 / SS120).